Here is a 572-residue protein sequence, read N- to C-terminus: Putative carbohydrate transport ATP-binding protein MPN_258 (572 aa).

ABC transporter domains follow at residues 6 to 253 and 327 to 572; these read FRME…MGKE and RFIR…LIMQ. 40 to 47 is an ATP binding site; it reads GENGAGKS.

Belongs to the ABC transporter superfamily.

It is found in the cell membrane. Part of the ABC transporter complex involved in carbohydrates import. Probably responsible for energy coupling to the transport system. In Mycoplasma pneumoniae (strain ATCC 29342 / M129 / Subtype 1) (Mycoplasmoides pneumoniae), this protein is Putative carbohydrate transport ATP-binding protein MPN_258.